A 166-amino-acid chain; its full sequence is Ubiquitin-conjugating enzyme E2-18 kDa (166 aa).

In terms of domain architecture, UBC core spans 5 to 165; it reads MALRRLMKEY…VRRLARKTLG (161 aa). Residue C90 is the Glycyl thioester intermediate of the active site. A Glycyl cysteine thioester (Cys-Gly) (interchain with G-Cter in ubiquitin) cross-link involves residue C90.

It belongs to the ubiquitin-conjugating enzyme family. Autoubiquitinated at Cys-90; undergoes 'Lys-48'-linked polyubiquitination, which leads to proteasome-dependent protein degradation.

It catalyses the reaction S-ubiquitinyl-[E1 ubiquitin-activating enzyme]-L-cysteine + [E2 ubiquitin-conjugating enzyme]-L-cysteine = [E1 ubiquitin-activating enzyme]-L-cysteine + S-ubiquitinyl-[E2 ubiquitin-conjugating enzyme]-L-cysteine.. It participates in protein modification; protein ubiquitination. Functionally, catalyzes the covalent attachment of ubiquitin to other proteins. Functions in degradation of misfolded or regulated proteins localized in the endoplasmic reticulum (ER) lumen or membrane via the ubiquitin-proteasome system. Cognate E2 conjugating enzyme for the doa10 ubiquitin ligase complex, which is part of the ERAD-C pathway responsible for the rapid degradation of membrane proteins with misfolded cytoplasmic domains, and of the hrd1 ubiquitin ligase complex, which is part of the ERAD-L and ERAD-M pathways responsible for the rapid degradation of soluble lumenal and membrane proteins with misfolded lumenal domains (ERAD-L), or ER-membrane proteins with misfolded transmembrane domains (ERAD-M). Together with hrd1, required for the degradation of the transcription factor sre1 precursor in the absence of its binding partner scp1. Has a role in the formation of chromatin structures that influence the localization of transcriptional silencing factors. This Schizosaccharomyces pombe (strain 972 / ATCC 24843) (Fission yeast) protein is Ubiquitin-conjugating enzyme E2-18 kDa (ubc7).